The sequence spans 972 residues: Protein NRDE2 homolog (972 aa).

The segment covering methionine 1–serine 17 has biased composition (polar residues). Residues methionine 1–aspartate 61 are disordered. The span at lysine 19 to arginine 33 shows a compositional bias: basic residues. Over residues aspartate 37–alanine 59 the composition is skewed to polar residues. 7 HAT repeats span residues leucine 159 to arginine 191, tryptophan 250 to glycine 282, threonine 318 to alanine 350, glutamine 355 to serine 386, glutamate 608 to leucine 640, tyrosine 788 to lysine 820, and threonine 860 to leucine 894. A Phosphoserine modification is found at serine 970.

It belongs to the NRDE2 family.

The protein localises to the nucleus. This Schizosaccharomyces pombe (strain 972 / ATCC 24843) (Fission yeast) protein is Protein NRDE2 homolog.